The following is a 91-amino-acid chain: Pyruvate kinase (91 aa).

Position 48 (arginine 48) interacts with substrate. K(+)-binding residues include asparagine 50, serine 52, aspartate 82, and threonine 83. 50-53 (NFSH) is an ATP binding site. Residue arginine 89 participates in ATP binding.

This sequence belongs to the pyruvate kinase family. In terms of assembly, homotetramer. Requires Mg(2+) as cofactor. K(+) is required as a cofactor.

It catalyses the reaction pyruvate + ATP = phosphoenolpyruvate + ADP + H(+). It functions in the pathway carbohydrate degradation; glycolysis; pyruvate from D-glyceraldehyde 3-phosphate: step 5/5. The sequence is that of Pyruvate kinase from Leishmania braziliensis.